The following is a 307-amino-acid chain: Homoserine kinase (307 aa).

ATP is bound at residue 85-95 (PLTRGLGSSAA).

The protein belongs to the GHMP kinase family. Homoserine kinase subfamily.

The protein localises to the cytoplasm. The enzyme catalyses L-homoserine + ATP = O-phospho-L-homoserine + ADP + H(+). It participates in amino-acid biosynthesis; L-threonine biosynthesis; L-threonine from L-aspartate: step 4/5. Its function is as follows. Catalyzes the ATP-dependent phosphorylation of L-homoserine to L-homoserine phosphate. This Caldicellulosiruptor bescii (strain ATCC BAA-1888 / DSM 6725 / KCTC 15123 / Z-1320) (Anaerocellum thermophilum) protein is Homoserine kinase.